Consider the following 692-residue polypeptide: Paramyosin (692 aa).

The nonhelical region stretch occupies residues 1–15; sequence MNKKRDSELAKLRKL. A coiled-coil region spans residues 16-692; the sequence is LEDVHIESEE…DHRVKELLLQ (677 aa). Residues 26–57 form a disordered region; it reads TAHHLRQKHQAAIQEMQDQLDQLQKAKNKSDK.

Belongs to the paramyosin family. As to quaternary structure, homodimer.

It is found in the cytoplasm. Its subcellular location is the myofibril. Its function is as follows. Paramyosin is a major structural component of many thick filaments isolated from invertebrate muscles. The polypeptide is Paramyosin (Dermatophagoides farinae (American house dust mite)).